The sequence spans 440 residues: Thymidine phosphorylase (440 aa).

The protein belongs to the thymidine/pyrimidine-nucleoside phosphorylase family. As to quaternary structure, homodimer.

The enzyme catalyses thymidine + phosphate = 2-deoxy-alpha-D-ribose 1-phosphate + thymine. Its pathway is pyrimidine metabolism; dTMP biosynthesis via salvage pathway; dTMP from thymine: step 1/2. The enzymes which catalyze the reversible phosphorolysis of pyrimidine nucleosides are involved in the degradation of these compounds and in their utilization as carbon and energy sources, or in the rescue of pyrimidine bases for nucleotide synthesis. In Salmonella dublin (strain CT_02021853), this protein is Thymidine phosphorylase.